A 268-amino-acid polypeptide reads, in one-letter code: Ribosomal RNA large subunit methyltransferase E (268 aa).

Residues G50, W52, D68, D84, and D109 each contribute to the S-adenosyl-L-methionine site. The active-site Proton acceptor is the K149. A TRAM domain is found at 196 to 254; sequence PLRKGDKFVVDIEKLGSSGDGAVLIEGFVVFVKEVEVGEKVRIKISDVKPNFAFADVEE.

The protein belongs to the class I-like SAM-binding methyltransferase superfamily. RNA methyltransferase RlmE family.

The protein localises to the cytoplasm. It catalyses the reaction uridine(2552) in 23S rRNA + S-adenosyl-L-methionine = 2'-O-methyluridine(2552) in 23S rRNA + S-adenosyl-L-homocysteine + H(+). In terms of biological role, specifically methylates the uridine in position 2552 of 23S rRNA at the 2'-O position of the ribose in the fully assembled 50S ribosomal subunit. This Methanosarcina mazei (strain ATCC BAA-159 / DSM 3647 / Goe1 / Go1 / JCM 11833 / OCM 88) (Methanosarcina frisia) protein is Ribosomal RNA large subunit methyltransferase E.